We begin with the raw amino-acid sequence, 265 residues long: Palmitoyltransferase ZDHHC21 (265 aa).

At 1 to 16 the chain is on the cytoplasmic side; sequence MGLRIHFVVDPHGWCC. The helical transmembrane segment at 17–37 threads the bilayer; sequence MGLIVFVWLYNIVIIPKIVLF. Residues 38–44 lie on the Extracellular side of the membrane; that stretch reads PHYEEGH. Residues 45–65 traverse the membrane as a helical segment; sequence IPGILIIIFYGISIFCLVALV. Over 66 to 133 the chain is Cytoplasmic; that stretch reads RASLTDPGRL…NNCVGEDNHW (68 aa). Residues 90–140 form the DHHC domain; it reads ELCNKCNLMRPKRSHHCSRCGHCVRRMDHHCPWINNCVGEDNHWLFLQLCF. Cys120 serves as the catalytic S-palmitoyl cysteine intermediate. Residues 134-154 traverse the membrane as a helical segment; it reads LFLQLCFYTELLTCYALMFSF. Residues 155–185 are Extracellular-facing; the sequence is CHYYYFLPLKKRNLDLFVVRHELAIMRLAAF. A helical membrane pass occupies residues 186-206; the sequence is MGITMLVGITGLFYTQLIGII. Over 207–265 the chain is Cytoplasmic; it reads TDTTSIEKMSNCCEEISRPRKPWQQTFSEVFGTRWKILWFIPFRQRQPLRVPYHFANHV.

The protein belongs to the DHHC palmitoyltransferase family. Widely expressed. Expressed in Henle's layer within the hair bulb and the hair shaft cuticle (at protein level). Expression is limited to the post-mitotic lineages of inner root sheath (IRS) and cuticle.

It localises to the golgi apparatus membrane. Its subcellular location is the golgi apparatus. The protein resides in the cis-Golgi network membrane. It is found in the cell membrane. The catalysed reaction is L-cysteinyl-[protein] + hexadecanoyl-CoA = S-hexadecanoyl-L-cysteinyl-[protein] + CoA. In terms of biological role, palmitoyltransferase that catalyzes the addition of palmitate onto various protein substrates. Palmitoylates sex steroid hormone receptors, including ESR1, PGR and AR, thereby regulating their targeting to the plasma membrane. This affects rapid intracellular signaling by sex hormones via ERK and AKT kinases and the generation of cAMP, but does not affect that mediated by their nuclear receptor. Palmitoylates FYN, regulates its localization in hair follicles and plays a key role in epidermal homeostasis and hair follicle differentiation. Through the palmitoylation of PLCB1 and the regulation of PLCB1 downstream signaling may indirectly regulate the function of the endothelial barrier and the adhesion of leukocytes to the endothelium. Also has a palmitoyltransferase activity toward ADRA1D, positively regulating its activity and expression and may thereby play a role in vascular contraction. May also palmitoylate eNOS and LCK. This chain is Palmitoyltransferase ZDHHC21, found in Mus musculus (Mouse).